Here is a 786-residue protein sequence, read N- to C-terminus: Signal transducer and activator of transcription 5B (786 aa).

A Phosphotyrosine modification is found at Tyr90. Ser128 bears the Phosphoserine mark. Residues 589 to 686 enclose the SH2 domain; sequence WNDGAILGFV…EVYSKYYTPV (98 aa). Phosphotyrosine occurs at positions 682 and 699.

It belongs to the transcription factor STAT family. As to quaternary structure, upon activation, forms a homodimer or a heterodimer with a related family member. Binds NR3C1. Interacts with NCOA1. Interacts with NMI. Interacts with SOCS7. Interacts (via SH2 domain) with INSR. Interacts with CPEB3; this inhibits STAT5B-mediated transcriptional activation. In terms of processing, tyrosine phosphorylated in response to signaling via activated KIT, resulting in translocation to the nucleus. Tyrosine phosphorylated in response to signaling via activated FLT3; wild-type FLT3 results in much weaker phosphorylation than constitutively activated mutant FLT3. Alternatively, can be phosphorylated by JAK2. Phosphorylation at Tyr-699 by PTK6 or HCK leads to an increase of its transcriptional activity.

It localises to the cytoplasm. The protein resides in the nucleus. Carries out a dual function: signal transduction and activation of transcription. Mediates cellular responses to the cytokine KITLG/SCF and other growth factors. Binds to the GAS element and activates PRL-induced transcription. Positively regulates hematopoietic/erythroid differentiation. This Rattus norvegicus (Rat) protein is Signal transducer and activator of transcription 5B (Stat5b).